We begin with the raw amino-acid sequence, 775 residues long: Meiotic driver SPOK2 (775 aa).

The stretch at 4–69 (KDRIAQLLRE…RCERERLQLE (66 aa)) forms a coiled coil. Disordered stretches follow at residues 18-51 (KARE…REEE), 211-249 (QKDD…YICS), 442-525 (LSSA…AMAD), and 734-761 (PPPK…AQLF). Residues 444–457 (SAPSSQNTDISEYT) are compositionally biased toward polar residues.

The protein localises to the cytoplasm. It is found in the nucleus. In terms of biological role, promotes unequal transmission of alleles from the parental zygote to progeny spores by acting as poison/antidote system, leading to poisoning of progeny that do not inherit the allele. May possess DNA nuclease activity that leads to spore killing, and a kinase activity that confers resistance to the nuclease activity. This is Meiotic driver SPOK2 from Podospora anserina (strain S / ATCC MYA-4624 / DSM 980 / FGSC 10383) (Pleurage anserina).